The primary structure comprises 360 residues: Dual-specificity RNA methyltransferase RlmN (360 aa).

Catalysis depends on glutamate 89, which acts as the Proton acceptor. The Radical SAM core domain maps to 95–330 (DSGRGTLCVS…TRVTRGQDID (236 aa)). Residues cysteine 102 and cysteine 333 are joined by a disulfide bond. Positions 109, 113, and 116 each coordinate [4Fe-4S] cluster. S-adenosyl-L-methionine is bound by residues 159-160 (GE), serine 191, 213-215 (SLH), and asparagine 290. Residue cysteine 333 is the S-methylcysteine intermediate of the active site.

The protein belongs to the radical SAM superfamily. RlmN family. It depends on [4Fe-4S] cluster as a cofactor.

It localises to the cytoplasm. The enzyme catalyses adenosine(2503) in 23S rRNA + 2 reduced [2Fe-2S]-[ferredoxin] + 2 S-adenosyl-L-methionine = 2-methyladenosine(2503) in 23S rRNA + 5'-deoxyadenosine + L-methionine + 2 oxidized [2Fe-2S]-[ferredoxin] + S-adenosyl-L-homocysteine. It catalyses the reaction adenosine(37) in tRNA + 2 reduced [2Fe-2S]-[ferredoxin] + 2 S-adenosyl-L-methionine = 2-methyladenosine(37) in tRNA + 5'-deoxyadenosine + L-methionine + 2 oxidized [2Fe-2S]-[ferredoxin] + S-adenosyl-L-homocysteine. Functionally, specifically methylates position 2 of adenine 2503 in 23S rRNA and position 2 of adenine 37 in tRNAs. m2A2503 modification seems to play a crucial role in the proofreading step occurring at the peptidyl transferase center and thus would serve to optimize ribosomal fidelity. The protein is Dual-specificity RNA methyltransferase RlmN of Alkalilimnicola ehrlichii (strain ATCC BAA-1101 / DSM 17681 / MLHE-1).